Here is a 481-residue protein sequence, read N- to C-terminus: Hyaluronidase-4 (481 aa).

The Cytoplasmic portion of the chain corresponds to 1-8 (MKVLSEGQ). A helical transmembrane segment spans residues 9 to 29 (LKLCVVQPVHLTSWLLIFFIL). Topologically, residues 30-453 (KSISCLKPAR…ADCREIKTAD (424 aa)) are extracellular. 5 cysteine pairs are disulfide-bonded: Cys-59–Cys-351, Cys-223–Cys-237, Cys-376–Cys-387, Cys-381–Cys-435, and Cys-437–Cys-446. N-linked (GlcNAc...) asparagine glycosylation is found at Asn-86 and Asn-115. The active-site Proton donor is Glu-147. Residue Asn-177 is glycosylated (N-linked (GlcNAc...) (complex) asparagine). N-linked (GlcNAc...) asparagine glycosylation is present at Asn-343. The chain crosses the membrane as a helical span at residues 454–474 (GCSGVSPSPGSLMTLCLLLLA). At 475 to 481 (SYRSIQL) the chain is on the cytoplasmic side.

It belongs to the glycosyl hydrolase 56 family. Detected in placenta and skeletal muscle.

It localises to the membrane. The enzyme catalyses Random hydrolysis of (1-&gt;4)-linkages between N-acetyl-beta-D-glucosamine and D-glucuronate residues in hyaluronate.. Endo-hyaluronidase that degrades hyaluronan to smaller oligosaccharide fragments. Also has chondroitin sulfate hydrolase activity, The best substrate being the galactosaminidic linkage in the sequence of a trisulfated tetrasaccharide. The polypeptide is Hyaluronidase-4 (HYAL4) (Homo sapiens (Human)).